A 230-amino-acid polypeptide reads, in one-letter code: Uracil-DNA glycosylase (230 aa).

The active-site Proton acceptor is the Asp70.

It belongs to the uracil-DNA glycosylase (UDG) superfamily. UNG family.

Its subcellular location is the cytoplasm. The catalysed reaction is Hydrolyzes single-stranded DNA or mismatched double-stranded DNA and polynucleotides, releasing free uracil.. Functionally, excises uracil residues from the DNA which can arise as a result of misincorporation of dUMP residues by DNA polymerase or due to deamination of cytosine. In Pseudomonas putida (strain W619), this protein is Uracil-DNA glycosylase.